Here is a 310-residue protein sequence, read N- to C-terminus: Aspartate carbamoyltransferase catalytic subunit (310 aa).

2 residues coordinate carbamoyl phosphate: Arg58 and Thr59. Position 86 (Lys86) interacts with L-aspartate. Carbamoyl phosphate-binding residues include Arg108, His136, and Gln139. Arg169 and Arg224 together coordinate L-aspartate. Residues Gly265 and Pro266 each contribute to the carbamoyl phosphate site.

The protein belongs to the aspartate/ornithine carbamoyltransferase superfamily. ATCase family. As to quaternary structure, heterododecamer (2C3:3R2) of six catalytic PyrB chains organized as two trimers (C3), and six regulatory PyrI chains organized as three dimers (R2).

The catalysed reaction is carbamoyl phosphate + L-aspartate = N-carbamoyl-L-aspartate + phosphate + H(+). Its pathway is pyrimidine metabolism; UMP biosynthesis via de novo pathway; (S)-dihydroorotate from bicarbonate: step 2/3. Functionally, catalyzes the condensation of carbamoyl phosphate and aspartate to form carbamoyl aspartate and inorganic phosphate, the committed step in the de novo pyrimidine nucleotide biosynthesis pathway. The chain is Aspartate carbamoyltransferase catalytic subunit from Trichlorobacter lovleyi (strain ATCC BAA-1151 / DSM 17278 / SZ) (Geobacter lovleyi).